A 414-amino-acid polypeptide reads, in one-letter code: Cyclic di-GMP phosphodiesterase PA4108 (414 aa).

In terms of domain architecture, HD-GYP spans 133 to 330 (ISASVLRHPN…YPVGALVRLE (198 aa)). A divalent metal cation-binding residues include histidine 160, histidine 192, aspartate 193, histidine 221, histidine 246, and histidine 247.

As to quaternary structure, monomer.

It catalyses the reaction 3',3'-c-di-GMP + 2 H2O = 2 GMP + 2 H(+). Activated by Mg(2+) and Mn(2+). Its function is as follows. Phosphodiesterase (PDE) that catalyzes the hydrolysis of cyclic diguanylate (c-di-GMP) to GMP. Hydrolyzes c-di-GMP to GMP in a two-step reaction, via the linear intermediate 5'-phosphoguanylyl(3'-&gt;5')guanosine (pGpG). In vitro, can use pGpG as an alternative substrate and hydrolyze it into GMP. Acts in regulation of motility, synthesis of virulence determinants and biofilm architecture. The chain is Cyclic di-GMP phosphodiesterase PA4108 from Pseudomonas aeruginosa (strain ATCC 15692 / DSM 22644 / CIP 104116 / JCM 14847 / LMG 12228 / 1C / PRS 101 / PAO1).